The primary structure comprises 2108 residues: Mycocerosic acid synthase-like polyketide synthase (2108 aa).

The first 23 residues, 1–23 (MGKERTKTVDRTRVTPVAVIGMG), serve as a signal peptide directing secretion. C24 carries the N-palmitoyl cysteine lipid modification. C24 is lipidated: S-diacylglycerol cysteine. The Ketosynthase family 3 (KS3) domain maps to 24 to 436 (CRLPGGIDSP…GTNVHAIVEQ (413 aa)). C185 functions as the Acyl-thioester intermediate; for beta-ketoacyl synthase activity in the catalytic mechanism. Catalysis depends on for beta-ketoacyl synthase activity residues H320 and H356. The interval 438–542 (PVPAPESGAP…PYPPAVGQDD (105 aa)) is linker domain (LD). Positions 543–842 (RGPVWVFSGQ…AAALAGMRRE (300 aa)) are acyltransferase (AT). The Acyl-ester intermediate; for acyltransferase activity role is filled by S634. The dehydratase (DH) stretch occupies residues 900-1184 (NTVAVHPLLG…LAVRGLQLGT (285 aa)). The interval 905-1025 (HPLLGSHVRL…AVLHVVREAD (121 aa)) is N-terminal hotdog fold. The PKS/mFAS DH domain occupies 905-1191 (HPLLGSHVRL…LGTGASQASE (287 aa)). Residue H938 is the Proton acceptor; for dehydratase activity of the active site. Residues 1044–1191 (PHKVDGAEVR…LGTGASQASE (148 aa)) form a C-terminal hotdog fold region. D1108 functions as the Proton donor; for dehydratase activity in the catalytic mechanism. Residues 1220 to 1391 (AWLLISTCDA…SGEDETAWRN (172 aa)) are pseudo beta-ketoacyl reductase (PsiKR). The tract at residues 1419 to 1743 (AGMRLQIRTP…EHTGKLILDV (325 aa)) is enoylreductase (ER). The interval 1765 to 2004 (GSYIITGGLG…HSPFAEKFQS (240 aa)) is beta-ketoacyl reductase (KR). NADP(+) is bound by residues 1773–1776 (LGGL), 1796–1799 (SRSQ), 1824–1825 (DI), and 1897–1898 (FS). Residues 2025–2101 (EEWPDRLRRL…DLMCDKLAAD (77 aa)) form the Carrier domain. S2060 is subject to O-(pantetheine 4'-phosphoryl)serine.

In terms of assembly, homodimer.

It is found in the cell membrane. The protein operates within lipid metabolism; fatty acid biosynthesis. In terms of biological role, polyketide synthase likely involved in the biosynthesis of a polymethyl-branched fatty acid (PMB-FA) that might only be produced during host infection. Is required for the full virulence of M.tuberculosis during host infection. This chain is Mycocerosic acid synthase-like polyketide synthase, found in Mycobacterium tuberculosis (strain ATCC 25618 / H37Rv).